A 390-amino-acid chain; its full sequence is DNA polymerase IV (390 aa).

Residues 6–187 (VMHVDLDAFF…LDISIMPGIG (182 aa)) form the UmuC domain. Aspartate 10 and aspartate 105 together coordinate Mg(2+). Glutamate 106 is an active-site residue.

Belongs to the DNA polymerase type-Y family. As to quaternary structure, monomer. The cofactor is Mg(2+).

Its subcellular location is the cytoplasm. It carries out the reaction DNA(n) + a 2'-deoxyribonucleoside 5'-triphosphate = DNA(n+1) + diphosphate. Its function is as follows. Poorly processive, error-prone DNA polymerase involved in untargeted mutagenesis. Copies undamaged DNA at stalled replication forks, which arise in vivo from mismatched or misaligned primer ends. These misaligned primers can be extended by PolIV. Exhibits no 3'-5' exonuclease (proofreading) activity. May be involved in translesional synthesis, in conjunction with the beta clamp from PolIII. This Dehalococcoides mccartyi (strain ATCC BAA-2266 / KCTC 15142 / 195) (Dehalococcoides ethenogenes (strain 195)) protein is DNA polymerase IV.